We begin with the raw amino-acid sequence, 1904 residues long: Callose synthase 10 (1904 aa).

The stretch at 100-132 (VIKQKLAKRDGASIDRDRDIERLWEFYKLYKRR) is one HAT 1 repeat. 6 consecutive transmembrane segments (helical) span residues 491 to 511 (SFIRLWIFMFIMFQSLTIIAF), 532 to 552 (AIMNFIECLLDVVLMYGAYSM), 562 to 582 (VIRFLWWGLGSAFVVYYYVKV), 594 to 614 (FFFHLYILVLGCYAAVRLIFG), 661 to 681 (YVAFWLVVLASKFTFAYFLQI), and 722 to 742 (VLAIYLMDIHIWYTLLSAIIG). The stretch at 678–701 (FLQIKPLVKPTNTIIHLPPFQYSW) is one LRR 1 repeat. LRR repeat units lie at residues 751–774 (LGEIRTIEMVHKRFESFPEAFAQN) and 925–948 (TLNLKKLQLVVSRFTALTGLLIRN). The stretch at 1074 to 1107 (YSSSELRSENEDGISILFYLQKIFPDEWENFLER) is one HAT 2 repeat. The stretch at 1159-1181 (FLERRGLGVDDASLTNMPRGFES) is one LRR 4 repeat. Helical transmembrane passes span 1474–1494 (FTTVGFYVCTMMTVLTVYVFL), 1529–1549 (FLVQIGIFTAVPMVMGFILEL), 1554–1574 (AIFSFITMQFQLCSVFFTFSL), 1621–1641 (AFEVALLLIIYIAYGYTDGGA), 1644–1664 (FVLLTISSWFLVISWLFAPYI), 1747–1767 (LALYGYSWVVLVVIVFLFKLF), 1783–1803 (FLQGVASITFIALIVVAIAMT), 1811–1831 (FACVLGFIPTGWALLSLAITW), and 1853–1873 (AAMGMLIFSPIALLSWFPFIS). The stretch at 1659–1691 (LFAPYIFNPSGFEWQKTVEDFEDWVSWLMYKGG) is one HAT 3 repeat.

The protein belongs to the glycosyltransferase 48 family.

The protein resides in the cell membrane. It carries out the reaction [(1-&gt;3)-beta-D-glucosyl](n) + UDP-alpha-D-glucose = [(1-&gt;3)-beta-D-glucosyl](n+1) + UDP + H(+). Its function is as follows. Involved in sporophytic and gametophytic development. Required for normal plant development and for the proper accumulation of callose at cell plates, cll walls and plasmodesmata. During pollen formation, required for the entry of microspores into mitosis. During plant growth and development, callose is found as a transitory component of the cell plate in dividing cells, is a major component of pollen mother cell walls and pollen tubes, and is found as a structural component of plasmodesmatal canals. Required for proper cell division and tissue patterning throughout plant organs, including stomatal patterning. The chain is Callose synthase 10 (CALS10) from Arabidopsis thaliana (Mouse-ear cress).